Consider the following 276-residue polypeptide: Putative serine/threonine-protein kinase R436 (276 aa).

The Protein kinase domain maps to 6 to 266; it reads YSLDKLIQNR…IKQKLNHFKT (261 aa). Residues 12 to 20 and lysine 35 contribute to the ATP site; that span reads IQNRKSKRI. Aspartate 132 (proton acceptor) is an active-site residue.

This sequence belongs to the protein kinase superfamily. Ser/Thr protein kinase family.

It catalyses the reaction L-seryl-[protein] + ATP = O-phospho-L-seryl-[protein] + ADP + H(+). The enzyme catalyses L-threonyl-[protein] + ATP = O-phospho-L-threonyl-[protein] + ADP + H(+). This Acanthamoeba polyphaga (Amoeba) protein is Putative serine/threonine-protein kinase R436.